Reading from the N-terminus, the 392-residue chain is Outer membrane protein assembly factor BamB (392 aa).

The N-terminal stretch at 1 to 19 is a signal peptide; it reads MQLRKLLLPGLLSVTLLSG. Residue Cys20 is the site of N-palmitoyl cysteine attachment. Cys20 is lipidated: S-diacylglycerol cysteine.

It belongs to the BamB family. As to quaternary structure, part of the Bam complex, which is composed of the outer membrane protein BamA, and four lipoproteins BamB, BamC, BamD and BamE. Monomer. Interacts directly with BamA. The Bam complex has the shape of a hat, with the BamA beta-barrel crown in the outer membrane and the periplasmic brim formed by the BamA POTRA domains and the 4 lipoproteins.

It is found in the cell outer membrane. Functionally, part of the outer membrane protein assembly complex (Bam), which is involved in assembly and insertion of beta-barrel proteins into the outer membrane. Nonessential member of the complex, which may orient the flexible periplasmic domain of BamA for interaction with other Bam components, chaperones and nascent outer membrane proteins. Efficient substrate folding and insertion into the outer membrane requires all 5 subunits. A lateral gate may open between the first and last strands of the BamA beta-barrel that allows substrate to insert into the outer membrane; comparison of the structures of complete and nearly complete Bam complexes show there is considerable movement of all 5 proteins. The chain is Outer membrane protein assembly factor BamB from Escherichia coli (strain K12).